The sequence spans 825 residues: NT-3 growth factor receptor (825 aa).

An N-terminal signal peptide occupies residues 1-31 (MDVSLCPAKCSFWRIFLLGSVWLDYVGSVLA). Disulfide bonds link cysteine 32/cysteine 38 and cysteine 36/cysteine 45. Topologically, residues 32–429 (CPANCVCSKT…TVTHKPEEDT (398 aa)) are extracellular. N-linked (GlcNAc...) asparagine glycans are attached at residues asparagine 68, asparagine 72, and asparagine 79. LRR repeat units follow at residues 104-125 (GLQK…AFAK) and 128-149 (HLRY…LFQT). 2 N-linked (GlcNAc...) asparagine glycosylation sites follow: asparagine 133 and asparagine 163. The LRRCT domain maps to 160-209 (NFFNCSCDIRWMQLWQEQGEAKLNSQNLYCINTDGSQLPLFRMNISQCDL). 2 disulfide bridges follow: cysteine 164-cysteine 189 and cysteine 166-cysteine 207. N-linked (GlcNAc...) asparagine glycosylation is found at asparagine 203, asparagine 218, asparagine 232, asparagine 259, asparagine 267, asparagine 272, and asparagine 294. Ig-like C2-type domains lie at 210–300 (PEIS…VALT) and 309–382 (SLEE…IAKN). A disulfide bond links cysteine 231 and cysteine 284. Cysteines 320 and 362 form a disulfide. N-linked (GlcNAc...) asparagine glycosylation is found at asparagine 375 and asparagine 388. A helical transmembrane segment spans residues 430-453 (FGVSIAVGLAAFACVLLVVLFVMI). Over 454 to 825 (NKYGRRSKFG…ATPIYLDILG (372 aa)) the chain is Cytoplasmic. The residue at position 493 (serine 493) is a Phosphoserine. Tyrosine 516 is subject to Phosphotyrosine; by autocatalysis. Residues 538 to 825 (IVLKRELGEG…ATPIYLDILG (288 aa)) form the Protein kinase domain. ATP-binding positions include 544–552 (LGEGAFGKV) and lysine 572. Catalysis depends on aspartate 679, which acts as the Proton acceptor. Phosphotyrosine; by autocatalysis occurs at positions 705, 709, and 710.

It belongs to the protein kinase superfamily. Tyr protein kinase family. Insulin receptor subfamily. Exists in a dynamic equilibrium between monomeric (low affinity) and dimeric (high affinity) structures. Binds SH2B2. Interacts with SQSTM1 and KIDINS220. Interacts with PTPRS. Interacts with MAPK8IP3/JIP3. Ligand-mediated auto-phosphorylation.

Its subcellular location is the membrane. The catalysed reaction is L-tyrosyl-[protein] + ATP = O-phospho-L-tyrosyl-[protein] + ADP + H(+). Receptor tyrosine kinase involved in nervous system and probably heart development. Upon binding of its ligand NTF3/neurotrophin-3, NTRK3 autophosphorylates and activates different signaling pathways, including the phosphatidylinositol 3-kinase/AKT and the MAPK pathways, that control cell survival and differentiation. The protein is NT-3 growth factor receptor (NTRK3) of Pan troglodytes (Chimpanzee).